A 539-amino-acid chain; its full sequence is Chaperonin GroEL (539 aa).

ATP is bound by residues 30–33 (TLGP), Lys-51, 87–91 (DGTTT), Gly-415, 479–481 (NAA), and Asp-495.

The protein belongs to the chaperonin (HSP60) family. In terms of assembly, forms a cylinder of 14 subunits composed of two heptameric rings stacked back-to-back. Interacts with the co-chaperonin GroES.

The protein resides in the cytoplasm. It catalyses the reaction ATP + H2O + a folded polypeptide = ADP + phosphate + an unfolded polypeptide.. In terms of biological role, together with its co-chaperonin GroES, plays an essential role in assisting protein folding. The GroEL-GroES system forms a nano-cage that allows encapsulation of the non-native substrate proteins and provides a physical environment optimized to promote and accelerate protein folding. This Enterobacter asburiae protein is Chaperonin GroEL.